Here is a 273-residue protein sequence, read N- to C-terminus: Ribosomal RNA small subunit methyltransferase A (273 aa).

S-adenosyl-L-methionine-binding residues include asparagine 18, leucine 20, glycine 45, glutamate 66, aspartate 91, and asparagine 113.

It belongs to the class I-like SAM-binding methyltransferase superfamily. rRNA adenine N(6)-methyltransferase family. RsmA subfamily.

Its subcellular location is the cytoplasm. It catalyses the reaction adenosine(1518)/adenosine(1519) in 16S rRNA + 4 S-adenosyl-L-methionine = N(6)-dimethyladenosine(1518)/N(6)-dimethyladenosine(1519) in 16S rRNA + 4 S-adenosyl-L-homocysteine + 4 H(+). Functionally, specifically dimethylates two adjacent adenosines (A1518 and A1519) in the loop of a conserved hairpin near the 3'-end of 16S rRNA in the 30S particle. May play a critical role in biogenesis of 30S subunits. The protein is Ribosomal RNA small subunit methyltransferase A of Salmonella choleraesuis (strain SC-B67).